Consider the following 77-residue polypeptide: Large ribosomal subunit protein eL13 (77 aa).

This sequence belongs to the eukaryotic ribosomal protein eL13 family.

This is Large ribosomal subunit protein eL13 from Sulfurisphaera tokodaii (strain DSM 16993 / JCM 10545 / NBRC 100140 / 7) (Sulfolobus tokodaii).